Here is an 84-residue protein sequence, read N- to C-terminus: Beta-mammal/insect toxin Ts1 (84 aa).

Positions 1–20 (MKGMILFISCLLLIGIVVEC) are cleaved as a signal peptide. One can recognise an LCN-type CS-alpha/beta domain in the interval 21-82 (KEGYLMDHEG…VWDRATNKCG (62 aa)). 4 disulfides stabilise this stretch: cysteine 31–cysteine 81, cysteine 35–cysteine 57, cysteine 43–cysteine 62, and cysteine 47–cysteine 64. Cysteine 81 is modified (cysteine amide).

It belongs to the long (4 C-C) scorpion toxin superfamily. Sodium channel inhibitor family. In terms of processing, C-terminal amidation is important for high activity. In terms of tissue distribution, expressed by the venom gland.

It localises to the secreted. Voltage-gated sodium channels (Nav) gating-modifier. Acts both as alpha- and beta-toxin, since it affects not only activation but also inactivation of Nav channels. Binds to Nav domain DII and impairs the four Nav channel voltage sensors movements. Depending on Nav channel subtypes tested, can also bind Nav domains DIII (low affinity) and DIV (very low affinity). Acts on almost all the Nav channels tested (mammalian Nav1.2/SCN2A, Nav1.3/SCN3A, Nav1.4/SCN4A, Nav1.5/SCN5A, Nav1.6/SCN8A, Nav1.9/SCN11A, and insect DmNav1). Is highly active against both mammals and insects. Irreversibly modulates DmNav channels. Other Ts1 activities have been studied, such as immunomodulation, antimicrobial activity or exocrine secretion. This toxin exhibits an antifungal activity against filamentous fungi. In vitro, it has an important immunomodulatory effect on macrophages by stimulating the release of pro-inflammatory cytokines. It also shows an activity in exocrine secretion in pancreas, stomach and adrenal gland. The chain is Beta-mammal/insect toxin Ts1 from Tityus serrulatus (Brazilian scorpion).